We begin with the raw amino-acid sequence, 213 residues long: Orotate phosphoribosyltransferase (213 aa).

Lys-26 contacts 5-phospho-alpha-D-ribose 1-diphosphate. Residue 34-35 coordinates orotate; that stretch reads FF. Residues 72 to 73, Arg-99, Lys-100, Lys-103, His-105, and 124 to 132 contribute to the 5-phospho-alpha-D-ribose 1-diphosphate site; these read YK and DDVITAGTA. The orotate site is built by Thr-128 and Arg-156.

This sequence belongs to the purine/pyrimidine phosphoribosyltransferase family. PyrE subfamily. In terms of assembly, homodimer. Requires Mg(2+) as cofactor.

The catalysed reaction is orotidine 5'-phosphate + diphosphate = orotate + 5-phospho-alpha-D-ribose 1-diphosphate. It participates in pyrimidine metabolism; UMP biosynthesis via de novo pathway; UMP from orotate: step 1/2. Functionally, catalyzes the transfer of a ribosyl phosphate group from 5-phosphoribose 1-diphosphate to orotate, leading to the formation of orotidine monophosphate (OMP). The protein is Orotate phosphoribosyltransferase of Escherichia coli O157:H7.